The primary structure comprises 235 residues: tRNA1(Val) (adenine(37)-N6)-methyltransferase (235 aa).

Belongs to the methyltransferase superfamily. tRNA (adenine-N(6)-)-methyltransferase family.

The protein resides in the cytoplasm. The catalysed reaction is adenosine(37) in tRNA1(Val) + S-adenosyl-L-methionine = N(6)-methyladenosine(37) in tRNA1(Val) + S-adenosyl-L-homocysteine + H(+). Functionally, specifically methylates the adenine in position 37 of tRNA(1)(Val) (anticodon cmo5UAC). This is tRNA1(Val) (adenine(37)-N6)-methyltransferase from Flavobacterium johnsoniae (strain ATCC 17061 / DSM 2064 / JCM 8514 / BCRC 14874 / CCUG 350202 / NBRC 14942 / NCIMB 11054 / UW101) (Cytophaga johnsonae).